The sequence spans 1097 residues: FHIP family protein GK23746 (1097 aa).

A compositionally biased stretch (polar residues) spans 1–21; it reads MSWLRSSPLRQSLTRTTSSGN. The segment at 1 to 25 is disordered; it reads MSWLRSSPLRQSLTRTTSSGNGIRP. Ser491 bears the Phosphoserine mark. Disordered regions lie at residues 639–684, 820–856, and 932–1042; these read DVSA…SGRR, NENSPLHQQQSLQHPHHLQPLPAPQQTGAGAQQRSAY, and NNQQ…SEPV. Positions 641-654 are enriched in low complexity; it reads SASSGNGTGSVVVG. Residue Ser823 is modified to Phosphoserine. Low complexity-rich tracts occupy residues 824-852 and 932-948; these read PLHQQQSLQHPHHLQPLPAPQQTGAGAQQ and NNQQSSNQTHLNSSSSS. Residues 949–962 show a composition bias toward polar residues; it reads AVTTCETSLSTQPH. Over residues 973–985 the composition is skewed to low complexity; sequence TTSSTISTSSGTT. Positions 986–995 are enriched in gly residues; it reads AGSGGGGGSG. 2 stretches are compositionally biased toward low complexity: residues 996–1006 and 1013–1022; these read SNSSFSIGGST and SNNTTNSSST.

Belongs to the FHIP family.

The protein is FHIP family protein GK23746 of Drosophila willistoni (Fruit fly).